A 227-amino-acid chain; its full sequence is PKHD-type hydroxylase A1S_0473 (227 aa).

A Fe2OG dioxygenase domain is found at lysine 78–serine 178. Histidine 96, aspartate 98, and histidine 159 together coordinate Fe cation. Arginine 169 is a binding site for 2-oxoglutarate.

It depends on Fe(2+) as a cofactor. Requires L-ascorbate as cofactor.

In Acinetobacter baumannii (strain ATCC 17978 / DSM 105126 / CIP 53.77 / LMG 1025 / NCDC KC755 / 5377), this protein is PKHD-type hydroxylase A1S_0473.